The following is a 465-amino-acid chain: Pleckstrin homology domain-containing family S member 1 (465 aa).

In terms of domain architecture, PH spans 14–129 (EVCKQDYFIK…WVSFMSSFRQ (116 aa)). Residues 159 to 173 (PSSTSEAVGSSSPRN) show a composition bias toward polar residues. 2 disordered regions span residues 159–179 (PSST…QDKH) and 258–283 (ETSH…GDLH). The segment covering 258 to 271 (ETSHESVDSSKEEP) has biased composition (basic and acidic residues).

In Homo sapiens (Human), this protein is Pleckstrin homology domain-containing family S member 1.